The chain runs to 323 residues: tRNA U34 carboxymethyltransferase (323 aa).

Carboxy-S-adenosyl-L-methionine-binding positions include Lys91, Trp105, Lys110, Gly130, 152-154 (DPT), 181-182 (IE), Met196, Tyr200, and Arg315.

Belongs to the class I-like SAM-binding methyltransferase superfamily. CmoB family. As to quaternary structure, homotetramer.

It carries out the reaction carboxy-S-adenosyl-L-methionine + 5-hydroxyuridine(34) in tRNA = 5-carboxymethoxyuridine(34) in tRNA + S-adenosyl-L-homocysteine + H(+). Functionally, catalyzes carboxymethyl transfer from carboxy-S-adenosyl-L-methionine (Cx-SAM) to 5-hydroxyuridine (ho5U) to form 5-carboxymethoxyuridine (cmo5U) at position 34 in tRNAs. This is tRNA U34 carboxymethyltransferase from Escherichia coli O6:H1 (strain CFT073 / ATCC 700928 / UPEC).